The chain runs to 509 residues: Maturase K (509 aa).

This sequence belongs to the intron maturase 2 family. MatK subfamily.

Its subcellular location is the plastid. It is found in the chloroplast. Its function is as follows. Usually encoded in the trnK tRNA gene intron. Probably assists in splicing its own and other chloroplast group II introns. This Amentotaxus argotaenia (Chinese flowering yew) protein is Maturase K.